The primary structure comprises 21 residues: Dart gland peptide (21 aa).

The segment at 1–21 (SINNTGGSGNRRLDKNGFAGQ) is disordered. The N-linked (GlcNAc...) asparagine glycan is linked to Asn-3.

The protein localises to the secreted. In Cornu aspersum (Brown garden snail), this protein is Dart gland peptide.